The following is a 256-amino-acid chain: 1-(5-phosphoribosyl)-5-[(5-phosphoribosylamino)methylideneamino] imidazole-4-carboxamide isomerase (256 aa).

Aspartate 8 (proton acceptor) is an active-site residue. The active-site Proton donor is aspartate 130.

This sequence belongs to the HisA/HisF family.

It is found in the cytoplasm. The catalysed reaction is 1-(5-phospho-beta-D-ribosyl)-5-[(5-phospho-beta-D-ribosylamino)methylideneamino]imidazole-4-carboxamide = 5-[(5-phospho-1-deoxy-D-ribulos-1-ylimino)methylamino]-1-(5-phospho-beta-D-ribosyl)imidazole-4-carboxamide. It functions in the pathway amino-acid biosynthesis; L-histidine biosynthesis; L-histidine from 5-phospho-alpha-D-ribose 1-diphosphate: step 4/9. The polypeptide is 1-(5-phosphoribosyl)-5-[(5-phosphoribosylamino)methylideneamino] imidazole-4-carboxamide isomerase (Chlorobium phaeovibrioides (strain DSM 265 / 1930) (Prosthecochloris vibrioformis (strain DSM 265))).